A 550-amino-acid polypeptide reads, in one-letter code: Chaperonin GroEL (550 aa).

Residues 29–32, Lys-50, 86–90, Gly-414, and Asp-495 each bind ATP; these read TLGP and DGTTT.

Belongs to the chaperonin (HSP60) family. Forms a cylinder of 14 subunits composed of two heptameric rings stacked back-to-back. Interacts with the co-chaperonin GroES.

The protein localises to the cytoplasm. The enzyme catalyses ATP + H2O + a folded polypeptide = ADP + phosphate + an unfolded polypeptide.. Its function is as follows. Together with its co-chaperonin GroES, plays an essential role in assisting protein folding. The GroEL-GroES system forms a nano-cage that allows encapsulation of the non-native substrate proteins and provides a physical environment optimized to promote and accelerate protein folding. The sequence is that of Chaperonin GroEL from Parvibaculum lavamentivorans (strain DS-1 / DSM 13023 / NCIMB 13966).